Reading from the N-terminus, the 307-residue chain is MRSLIVVLGPTAVGKTKVAIFLAKYFQSPIISVDSRQLYKELPIGTAAPSIVELNQVKHYFVASLSVTDYYNASKFEKEAIALISNLHQKYQTIIACGGSMLYLDALCRGIDEIPTIDPKLRMNILSVYRKEGIDSILRQLRTHDPTFYNLVDLKNHKRVIHALEICLMTGKPYSQLRCGNVKKRSFNIIKIGLNRERQELYNRISIRVDKMIENGLLEEARRVYPYHHFNSLNTVGYKELFQFFDGKYTLDFAIEKIKRNTRIYSRKQIAWFKKDKEINWFYPNNIDEFETSCLLDTISHKSILLT.

An ATP-binding site is contributed by 9-16 (GPTAVGKT). Position 11 to 16 (11 to 16 (TAVGKT)) interacts with substrate. Residues 34 to 37 (DSRQ) form an interaction with substrate tRNA region.

Belongs to the IPP transferase family. As to quaternary structure, monomer. It depends on Mg(2+) as a cofactor.

The enzyme catalyses adenosine(37) in tRNA + dimethylallyl diphosphate = N(6)-dimethylallyladenosine(37) in tRNA + diphosphate. Functionally, catalyzes the transfer of a dimethylallyl group onto the adenine at position 37 in tRNAs that read codons beginning with uridine, leading to the formation of N6-(dimethylallyl)adenosine (i(6)A). This Azobacteroides pseudotrichonymphae genomovar. CFP2 protein is tRNA dimethylallyltransferase 2.